The sequence spans 79 residues: MAKEKFEEAMAKLEALVRKMETGDMTLEESLKAFEEGIRLSRLCASRLDDAERRVEMLIAENSNVTVQPLRENGEKNES.

Belongs to the XseB family. In terms of assembly, heterooligomer composed of large and small subunits.

The protein resides in the cytoplasm. It catalyses the reaction Exonucleolytic cleavage in either 5'- to 3'- or 3'- to 5'-direction to yield nucleoside 5'-phosphates.. Bidirectionally degrades single-stranded DNA into large acid-insoluble oligonucleotides, which are then degraded further into small acid-soluble oligonucleotides. The chain is Exodeoxyribonuclease 7 small subunit from Syntrophus aciditrophicus (strain SB).